The chain runs to 127 residues: Small ribosomal subunit protein uS11 (127 aa).

Belongs to the universal ribosomal protein uS11 family. As to quaternary structure, part of the 30S ribosomal subunit. Interacts with proteins S7 and S18. Binds to IF-3.

Located on the platform of the 30S subunit, it bridges several disparate RNA helices of the 16S rRNA. Forms part of the Shine-Dalgarno cleft in the 70S ribosome. The chain is Small ribosomal subunit protein uS11 from Nitrosococcus oceani (strain ATCC 19707 / BCRC 17464 / JCM 30415 / NCIMB 11848 / C-107).